The following is a 670-amino-acid chain: Outer dynein arm-docking complex subunit 1 (670 aa).

Coiled coils occupy residues 9-155 (SKEV…RYLN), 183-224 (AVRE…EQLH), and 302-381 (NFIN…IQLL). A disordered region spans residues 454–473 (KMAPLQPPDTLEDPPGFEAS). Ser-517 is subject to Phosphoserine. Disordered stretches follow at residues 526–596 (AGSS…ASSG) and 616–670 (VGSS…DSRG). Residues 584-596 (GHVTFGSTSASSG) are compositionally biased toward polar residues. Low complexity predominate over residues 650–670 (SSTGPASSTGPGSSTSKDSRG).

Belongs to the ODA1/DCC2 family. In terms of assembly, component of the outer dynein arm-docking complex along with ODAD2, ODAD3, ODAD4 and CLXN. Interacts with ODAD3. Interacts with ODAD4; this interaction may facilitate the recruitment and/or attachment of outer dynein arm docking complex proteins, including ODAD1, ODAD3, and ODAD4 to ciliary axonemes. Interacts with DNAH9. Interacts with MNS1. Interacts with PIERCE1 and PIERCE2; the interactions link the outer dynein arms docking complex (ODA-DC) to the internal microtubule inner proteins (MIP) in cilium axoneme. In terms of tissue distribution, expressed in nasal epithelial cells. Highly expressed in testis and also detected in lung, brain and kidney.

The protein localises to the cytoplasm. The protein resides in the cytoskeleton. It localises to the cilium axoneme. Component of the outer dynein arm-docking complex (ODA-DC) that mediates outer dynein arms (ODA) binding onto the doublet microtubule. Involved in mediating assembly of both ODAs and their axonemal docking complex onto ciliary microtubules. This Homo sapiens (Human) protein is Outer dynein arm-docking complex subunit 1.